Reading from the N-terminus, the 217-residue chain is tRNA (guanine-N(7)-)-methyltransferase (217 aa).

Positions 44, 69, 96, and 118 each coordinate S-adenosyl-L-methionine. Residue D118 is part of the active site. Residues K122, D154, and T191–E194 contribute to the substrate site.

The protein belongs to the class I-like SAM-binding methyltransferase superfamily. TrmB family.

The catalysed reaction is guanosine(46) in tRNA + S-adenosyl-L-methionine = N(7)-methylguanosine(46) in tRNA + S-adenosyl-L-homocysteine. The protein operates within tRNA modification; N(7)-methylguanine-tRNA biosynthesis. In terms of biological role, catalyzes the formation of N(7)-methylguanine at position 46 (m7G46) in tRNA. This Bacillus cereus (strain B4264) protein is tRNA (guanine-N(7)-)-methyltransferase.